We begin with the raw amino-acid sequence, 389 residues long: Succinate--CoA ligase [ADP-forming] subunit beta (389 aa).

Residues 9 to 244 (KQLLAEYGIP…KTQEDETEVT (236 aa)) form the ATP-grasp domain. ATP is bound by residues Lys-46, 53 to 55 (GRG), Gly-102, and Glu-107. Residues Asn-199 and Asp-213 each contribute to the Mg(2+) site. Substrate-binding positions include Asn-264 and 321 to 323 (GIV).

Belongs to the succinate/malate CoA ligase beta subunit family. In terms of assembly, heterotetramer of two alpha and two beta subunits. It depends on Mg(2+) as a cofactor.

It catalyses the reaction succinate + ATP + CoA = succinyl-CoA + ADP + phosphate. It carries out the reaction GTP + succinate + CoA = succinyl-CoA + GDP + phosphate. It functions in the pathway carbohydrate metabolism; tricarboxylic acid cycle; succinate from succinyl-CoA (ligase route): step 1/1. In terms of biological role, succinyl-CoA synthetase functions in the citric acid cycle (TCA), coupling the hydrolysis of succinyl-CoA to the synthesis of either ATP or GTP and thus represents the only step of substrate-level phosphorylation in the TCA. The beta subunit provides nucleotide specificity of the enzyme and binds the substrate succinate, while the binding sites for coenzyme A and phosphate are found in the alpha subunit. The sequence is that of Succinate--CoA ligase [ADP-forming] subunit beta from Xanthomonas euvesicatoria pv. vesicatoria (strain 85-10) (Xanthomonas campestris pv. vesicatoria).